Consider the following 437-residue polypeptide: Glucose-1-phosphate adenylyltransferase (437 aa).

Residues Y113, G179, 194–195 (EK), and S212 contribute to the alpha-D-glucose 1-phosphate site.

Belongs to the bacterial/plant glucose-1-phosphate adenylyltransferase family. As to quaternary structure, homotetramer.

The catalysed reaction is alpha-D-glucose 1-phosphate + ATP + H(+) = ADP-alpha-D-glucose + diphosphate. It functions in the pathway glycan biosynthesis; glycogen biosynthesis. In terms of biological role, involved in the biosynthesis of ADP-glucose, a building block required for the elongation reactions to produce glycogen. Catalyzes the reaction between ATP and alpha-D-glucose 1-phosphate (G1P) to produce pyrophosphate and ADP-Glc. In Haemophilus influenzae (strain 86-028NP), this protein is Glucose-1-phosphate adenylyltransferase.